The following is a 231-amino-acid chain: Putative N-acetylmannosamine-6-phosphate 2-epimerase (231 aa).

Belongs to the NanE family.

The enzyme catalyses an N-acyl-D-glucosamine 6-phosphate = an N-acyl-D-mannosamine 6-phosphate. It functions in the pathway amino-sugar metabolism; N-acetylneuraminate degradation; D-fructose 6-phosphate from N-acetylneuraminate: step 3/5. Functionally, converts N-acetylmannosamine-6-phosphate (ManNAc-6-P) to N-acetylglucosamine-6-phosphate (GlcNAc-6-P). The sequence is that of Putative N-acetylmannosamine-6-phosphate 2-epimerase from Listeria innocua serovar 6a (strain ATCC BAA-680 / CLIP 11262).